Here is a 195-residue protein sequence, read N- to C-terminus: Protein GrpE (195 aa).

A compositionally biased stretch (basic and acidic residues) spans 1 to 20 (MSSKEQKTPDEQVLDQKEAA). Residues 1–40 (MSSKEQKTPDEQVLDQKEAAKGQQADAAPETADVADPRDA) are disordered.

This sequence belongs to the GrpE family. Homodimer.

The protein resides in the cytoplasm. In terms of biological role, participates actively in the response to hyperosmotic and heat shock by preventing the aggregation of stress-denatured proteins, in association with DnaK and GrpE. It is the nucleotide exchange factor for DnaK and may function as a thermosensor. Unfolded proteins bind initially to DnaJ; upon interaction with the DnaJ-bound protein, DnaK hydrolyzes its bound ATP, resulting in the formation of a stable complex. GrpE releases ADP from DnaK; ATP binding to DnaK triggers the release of the substrate protein, thus completing the reaction cycle. Several rounds of ATP-dependent interactions between DnaJ, DnaK and GrpE are required for fully efficient folding. The sequence is that of Protein GrpE from Pectobacterium carotovorum subsp. carotovorum (strain PC1).